Consider the following 416-residue polypeptide: Multifunctional CCA protein (416 aa).

Residues glycine 8 and arginine 11 each coordinate ATP. 2 residues coordinate CTP: glycine 8 and arginine 11. Mg(2+) contacts are provided by aspartate 21 and aspartate 23. The ATP site is built by arginine 91, arginine 137, and arginine 140. Arginine 91, arginine 137, and arginine 140 together coordinate CTP. The HD domain maps to 226–327 (TGVHIMLVID…VNLLERCDAF (102 aa)).

This sequence belongs to the tRNA nucleotidyltransferase/poly(A) polymerase family. Bacterial CCA-adding enzyme type 1 subfamily. In terms of assembly, monomer. Can also form homodimers and oligomers. It depends on Mg(2+) as a cofactor. The cofactor is Ni(2+).

The enzyme catalyses a tRNA precursor + 2 CTP + ATP = a tRNA with a 3' CCA end + 3 diphosphate. It catalyses the reaction a tRNA with a 3' CCA end + 2 CTP + ATP = a tRNA with a 3' CCACCA end + 3 diphosphate. Catalyzes the addition and repair of the essential 3'-terminal CCA sequence in tRNAs without using a nucleic acid template. Adds these three nucleotides in the order of C, C, and A to the tRNA nucleotide-73, using CTP and ATP as substrates and producing inorganic pyrophosphate. tRNA 3'-terminal CCA addition is required both for tRNA processing and repair. Also involved in tRNA surveillance by mediating tandem CCA addition to generate a CCACCA at the 3' terminus of unstable tRNAs. While stable tRNAs receive only 3'-terminal CCA, unstable tRNAs are marked with CCACCA and rapidly degraded. In Janthinobacterium sp. (strain Marseille) (Minibacterium massiliensis), this protein is Multifunctional CCA protein.